The primary structure comprises 470 residues: 3-isopropylmalate dehydratase large subunit (470 aa).

Positions 351, 411, and 414 each coordinate [4Fe-4S] cluster.

Belongs to the aconitase/IPM isomerase family. LeuC type 1 subfamily. In terms of assembly, heterodimer of LeuC and LeuD. The cofactor is [4Fe-4S] cluster.

The enzyme catalyses (2R,3S)-3-isopropylmalate = (2S)-2-isopropylmalate. The protein operates within amino-acid biosynthesis; L-leucine biosynthesis; L-leucine from 3-methyl-2-oxobutanoate: step 2/4. In terms of biological role, catalyzes the isomerization between 2-isopropylmalate and 3-isopropylmalate, via the formation of 2-isopropylmaleate. The chain is 3-isopropylmalate dehydratase large subunit from Shewanella frigidimarina (strain NCIMB 400).